The chain runs to 145 residues: Putative BCoR-like protein 2 (145 aa).

A compositionally biased stretch (basic and acidic residues) spans 1 to 27 (MKEKLSKKRAEVKGNRSWLEEFLKPSD). The disordered stretch occupies residues 1–58 (MKEKLSKKRAEVKGNRSWLEEFLKPSDNEEGPPPKNKVLSNNASSQKPTHSSCIPLLR). A compositionally biased stretch (polar residues) spans 38–52 (VLSNNASSQKPTHSS).

This sequence belongs to the BCOR family.

The polypeptide is Putative BCoR-like protein 2 (BCORP1) (Homo sapiens (Human)).